Here is an 858-residue protein sequence, read N- to C-terminus: Receptor-like protein kinase ANXUR2 (858 aa).

An N-terminal signal peptide occupies residues 1–27; the sequence is MNEKLRILFSFLCFFYVLLVSPSQSNG. At 28-431 the chain is on the extracellular side; sequence QDISLSCGAS…VKKDFQGDKR (404 aa). N133, N293, N303, and N331 each carry an N-linked (GlcNAc...) asparagine glycan. The helical transmembrane segment at 432–452 threads the bilayer; it reads ITAFVIGSAGGVAAVLFCALC. Residues 453–858 lie on the Cytoplasmic side of the membrane; it reads FTMYQRKRKF…FSQIVNPKGR (406 aa). The Protein kinase domain occupies 521 to 794; it reads FDESNVIGVG…GDVLWNLEFA (274 aa). ATP is bound by residues 527-535 and K549; that span reads IGVGGFGKV. D645 (proton acceptor) is an active-site residue. Residues 800-858 are disordered; the sequence is TADGSRHRTPSNGGGSVDLGGGGGGVTVNISAGESDLGDDLSSEENSGIFSQIVNPKGR. The segment covering 811–825 has biased composition (gly residues); sequence NGGGSVDLGGGGGGV. Polar residues predominate over residues 843-858; that stretch reads EENSGIFSQIVNPKGR.

It belongs to the protein kinase superfamily. Ser/Thr protein kinase family. As to expression, expressed in pollen, but not in pistils or seedlings.

It localises to the cell membrane. The enzyme catalyses L-seryl-[protein] + ATP = O-phospho-L-seryl-[protein] + ADP + H(+). It catalyses the reaction L-threonyl-[protein] + ATP = O-phospho-L-threonyl-[protein] + ADP + H(+). Its function is as follows. Receptor-like protein kinase that controls pollen tube behavior by directing rupture at proper timing to release the sperm cell. The protein is Receptor-like protein kinase ANXUR2 (ANX2) of Arabidopsis thaliana (Mouse-ear cress).